The sequence spans 228 residues: Protein LIAT1 (228 aa).

The segment at 1–108 is disordered; that stretch reads MAGRGGTGAA…RAEPRDKEEN (108 aa). Acidic residues predominate over residues 12 to 24; that stretch reads YGEEGEEEEEEEA. Positions 49–71 are lysine-rich domain; it reads KRKVKKKKKKKKTKGSGKGDADK. The segment covering 50–63 has biased composition (basic residues); sequence RKVKKKKKKKKTKG. Positions 90 to 108 are enriched in basic and acidic residues; sequence LNPHKDHGLRAEPRDKEEN. Residues 113 to 165 form an interaction with ATE1 region; that stretch reads PYSYSINHPCFAEIEDTLSSQINESLRWDGILTDPEAEKERIRIYKLNRRKRY. The stretch at 169–178 is repeat 1; sequence ALKCFHSDPC.

Self-associates (via Lys-rich domain); targets LIAT1 to the nucleolus. Interacts with ATE1; it is not a substrate of ATE1, the interaction takes place in the cytoplasm and seems to increase ATE1 arginyltransferase activity. Interacts with JMJD6 and MRPS14. In terms of processing, post-translationally modified by JMJD6 lysyl-hydroxylase activity at its Lys-rich domain, which inhibits its self-association and nucleolar localization. In terms of tissue distribution, highly expressed in spleen, thymus, liver and brown adipose tissue. Moderately expressed in liver, testis and lung.

The protein resides in the nucleus. It localises to the nucleolus. It is found in the cytoplasm. Participates in nucleolar liquid-liquid phase separation (LLPS) through its N-terminal intrinsically disordered region (IDR). May be involved in ATE1-mediated N-terminal arginylation. The protein is Protein LIAT1 of Mus musculus (Mouse).